Consider the following 300-residue polypeptide: Serine/arginine-rich splicing factor SR34A (300 aa).

The region spanning 7–82 (RSIYVGNLPG…CRLRVELAHG (76 aa)) is the RRM 1 domain. Disordered stretches follow at residues 81–110 (HGGRGQSSSDRRGGYGGGGSGYGGGGGGGG) and 198–300 (YESS…EGSV). The span at 94–110 (GYGGGGSGYGGGGGGGG) shows a compositional bias: gly residues. One can recognise an RRM 2 domain in the interval 122-200 (FRVIVRGLPS…GFIRVKKYES (79 aa)). The segment covering 203–239 (SRSRSPSRSRSRSRSRSRSRGRGRSHSRSRSLSRSKS) has biased composition (basic residues). 8 positions are modified to phosphoserine: Ser207, Ser209, Ser231, Ser233, Ser239, Ser259, Ser275, and Ser285. The segment covering 253-262 (SRSISKSRSP) has biased composition (low complexity). Positions 275-287 (SRSKSRSRSRSRS) are enriched in basic residues.

Belongs to the splicing factor SR family. SR subfamily. Component of the spliceosome.

The protein localises to the nucleus speckle. It is found in the nucleus. It localises to the nucleoplasm. Probably involved in intron recognition and spliceosome assembly. The chain is Serine/arginine-rich splicing factor SR34A (SR34A) from Arabidopsis thaliana (Mouse-ear cress).